The primary structure comprises 355 residues: Adenine deaminase (355 aa).

Residues histidine 23, histidine 25, and histidine 211 each contribute to the Zn(2+) site. Glutamate 214 (proton donor) is an active-site residue. Residue aspartate 292 participates in Zn(2+) binding. Aspartate 293 contributes to the substrate binding site.

It belongs to the metallo-dependent hydrolases superfamily. Adenosine and AMP deaminases family. Adenine deaminase type 2 subfamily. Zn(2+) serves as cofactor.

It localises to the cytoplasm. The protein resides in the nucleus. The enzyme catalyses adenine + H2O + H(+) = hypoxanthine + NH4(+). Catalyzes the hydrolytic deamination of adenine to hypoxanthine. Plays an important role in the purine salvage pathway and in nitrogen catabolism. The polypeptide is Adenine deaminase (Kluyveromyces lactis (strain ATCC 8585 / CBS 2359 / DSM 70799 / NBRC 1267 / NRRL Y-1140 / WM37) (Yeast)).